A 277-amino-acid polypeptide reads, in one-letter code: MRPLQEKIIAYEHVLPEIDPQKEIRKSIDFLKDYLKENPFLKSYVLGISGGQDSTLTGKLCQMAIEEMREETGDDSYQFIAVRLPYGVQADASDAADAIAFQKPDQDLIVNIKDPVDAMVKVVEATGQKITDFNKGNIKARQRMVVQYAIAGANNGAVVGTDHAAENFSGFYTKYGDGAADLTPLFRLDKRQGKAMLKELGCPKHLYEKAPTADLEEEKPDLPDEVALGVTYKEVDDYLEGKEVSEKAAEQIEKLWKKSEHKRHLPVTIFDDFYKKN.

An ATP-binding site is contributed by 47 to 54; it reads GISGGQDS. Position 53 (D53) interacts with Mg(2+). Deamido-NAD(+) is bound at residue R141. T161 is a binding site for ATP. E166 provides a ligand contact to Mg(2+). Deamido-NAD(+) contacts are provided by K174 and D181. K190 and T212 together coordinate ATP. 261 to 262 is a binding site for deamido-NAD(+); sequence HK.

It belongs to the NAD synthetase family. Homodimer.

It carries out the reaction deamido-NAD(+) + NH4(+) + ATP = AMP + diphosphate + NAD(+) + H(+). It participates in cofactor biosynthesis; NAD(+) biosynthesis; NAD(+) from deamido-NAD(+) (ammonia route): step 1/1. Catalyzes the ATP-dependent amidation of deamido-NAD to form NAD. Uses ammonia as a nitrogen source. The chain is NH(3)-dependent NAD(+) synthetase from Lactobacillus gasseri (strain ATCC 33323 / DSM 20243 / BCRC 14619 / CIP 102991 / JCM 1131 / KCTC 3163 / NCIMB 11718 / NCTC 13722 / AM63).